Reading from the N-terminus, the 220-residue chain is Redox-sensing transcriptional repressor Rex (220 aa).

A DNA-binding region (H-T-H motif) is located at residues 25–64 (WYLSNVKLLKQKGERYVSSTQISKEINIDASQIAKDLSYV). NAD(+) is bound at residue 99 to 104 (GVGSLG).

Belongs to the transcriptional regulatory Rex family. As to quaternary structure, homodimer.

Its subcellular location is the cytoplasm. Functionally, modulates transcription in response to changes in cellular NADH/NAD(+) redox state. The chain is Redox-sensing transcriptional repressor Rex from Bacteroides fragilis (strain ATCC 25285 / DSM 2151 / CCUG 4856 / JCM 11019 / LMG 10263 / NCTC 9343 / Onslow / VPI 2553 / EN-2).